A 329-amino-acid polypeptide reads, in one-letter code: VSG expression site-associated protein 221A (329 aa).

A signal peptide spans 1-23; sequence MKVEIVELVVLLFSVTCVDAWLQ. Asn73, Asn294, and Asn308 each carry an N-linked (GlcNAc...) asparagine glycan.

In terms of biological role, not known but may be related to activation of the variant surface glycoprotein genes. This is VSG expression site-associated protein 221A from Trypanosoma brucei brucei.